A 439-amino-acid chain; its full sequence is 3-phosphoshikimate 1-carboxyvinyltransferase (439 aa).

Positions 29, 30, and 34 each coordinate 3-phosphoshikimate. Residue Lys-29 coordinates phosphoenolpyruvate. 2 residues coordinate phosphoenolpyruvate: Gly-100 and Arg-128. 3-phosphoshikimate contacts are provided by Ser-173, Ser-174, Gln-175, Ser-201, Asp-321, and Lys-348. Residue Gln-175 coordinates phosphoenolpyruvate. Asp-321 serves as the catalytic Proton acceptor. Positions 352 and 395 each coordinate phosphoenolpyruvate.

It belongs to the EPSP synthase family. Monomer.

The protein resides in the cytoplasm. The catalysed reaction is 3-phosphoshikimate + phosphoenolpyruvate = 5-O-(1-carboxyvinyl)-3-phosphoshikimate + phosphate. Its pathway is metabolic intermediate biosynthesis; chorismate biosynthesis. Catalyzes the transfer of the enolpyruvyl moiety of phosphoenolpyruvate (PEP) to the 5-hydroxyl of shikimate-3-phosphate (S3P) to produce enolpyruvyl shikimate-3-phosphate and inorganic phosphate. The sequence is that of 3-phosphoshikimate 1-carboxyvinyltransferase from Halobacterium salinarum (strain ATCC 700922 / JCM 11081 / NRC-1) (Halobacterium halobium).